The sequence spans 67 residues: Putative sodium channel alpha-toxin Acra5 (67 aa).

One can recognise an LCN-type CS-alpha/beta domain in the interval 2–65 (RDGYIMIKDT…VYGDRGVICR (64 aa)). Disulfide bonds link Cys13–Cys64, Cys17–Cys40, Cys26–Cys45, and Cys30–Cys47. Position 67 (Arg67) is a propeptide, removed by a carboxypeptidase.

This sequence belongs to the long (4 C-C) scorpion toxin superfamily. Sodium channel inhibitor family. Alpha subfamily. As to expression, expressed by the venom gland.

It localises to the secreted. In terms of biological role, alpha toxins bind voltage-independently at site-3 of sodium channels (Nav) and inhibit the inactivation of the activated channels, thereby blocking neuronal transmission. This Androctonus crassicauda (Arabian fat-tailed scorpion) protein is Putative sodium channel alpha-toxin Acra5.